Reading from the N-terminus, the 99-residue chain is Bacterial microcompartment shell vertex protein EutN (99 aa).

A BMV domain is found at 5–87 (MKLAVVTGQI…VDLCVIGIVD (83 aa)).

Belongs to the CcmL/EutN family. As to quaternary structure, homopentamer with a small central pore.

It is found in the bacterial microcompartment. Its pathway is amine and polyamine degradation; ethanolamine degradation. Its function is as follows. Probably forms vertices in the bacterial microcompartment (BMC) shell dedicated to ethanolamine degradation. Expression of eutK, eutL, eutM, eutN, eutS (eutSMNLK) in E.coli leads to formation of a single BMC. Coexpression of eutQ with eutSMNLK permits E.coli to make cells with more than one mobile BMC, as is usual in vivo. It may be involved in transporting positively charged molecules into and out of the BMC. Functionally, the ethanolamine (EA) catabolic bacterial microcompartment (BMC) probably concentrates low levels of ethanolamine catabolic enzymes, concentrates volatile reaction intermediates, keeps the level of toxic acetaldehyde low, generates enough acetyl-CoA to support cell growth, and maintains a pool of free coenzyme A (CoA) and NAD. In terms of biological role, expression of the eut operon allows this bacteria to use ethanolamine (EA) as a carbon, nitrogen and energy source. It relies on cobalamin (vitamin B12) both as a cofactor for the ethanolamine ammonia-lyase (EAL) activity and to induce the operon. EA enhances bacterial survival in macrophages in a concentration-dependent manner, suggesting it is an important nutrient during infection. This is Bacterial microcompartment shell vertex protein EutN from Salmonella typhimurium (strain LT2 / SGSC1412 / ATCC 700720).